Consider the following 91-residue polypeptide: UPF0213 protein NMA2126 (91 aa).

The GIY-YIG domain occupies 4–83 (SNWSLYLILC…AAQKRKLWEQ (80 aa)).

The protein belongs to the UPF0213 family.

This chain is UPF0213 protein NMA2126, found in Neisseria meningitidis serogroup A / serotype 4A (strain DSM 15465 / Z2491).